Reading from the N-terminus, the 60-residue chain is UPF0434 protein YPA_0693 (60 aa).

Belongs to the UPF0434 family.

In Yersinia pestis bv. Antiqua (strain Antiqua), this protein is UPF0434 protein YPA_0693.